The chain runs to 312 residues: DNA-directed RNA polymerase subunit alpha (312 aa).

The interval 1–226 (MIEFEKPIIT…EHLNLFTDLT (226 aa)) is alpha N-terminal domain (alpha-NTD). The alpha C-terminal domain (alpha-CTD) stretch occupies residues 243 to 312 (DEKVLDRTIE…DLGLGLKNDK (70 aa)).

It belongs to the RNA polymerase alpha chain family. Homodimer. The RNAP catalytic core consists of 2 alpha, 1 beta, 1 beta' and 1 omega subunit. When a sigma factor is associated with the core the holoenzyme is formed, which can initiate transcription.

The catalysed reaction is RNA(n) + a ribonucleoside 5'-triphosphate = RNA(n+1) + diphosphate. Its function is as follows. DNA-dependent RNA polymerase catalyzes the transcription of DNA into RNA using the four ribonucleoside triphosphates as substrates. The polypeptide is DNA-directed RNA polymerase subunit alpha (Streptococcus pyogenes serotype M1).